Here is a 287-residue protein sequence, read N- to C-terminus: Protein PXR1 (287 aa).

Residues 25-72 enclose the G-patch domain; the sequence is TSRFGHLQLEKFGWKPGMGLGMSPTSSHKTHIKVSIKDDNLGLGAKIK. Positions 143 to 155 are enriched in basic and acidic residues; that stretch reads LKSYSNDKKRSRD. Residues 143 to 254 are disordered; that stretch reads LKSYSNDKKR…TTASNIPSTV (112 aa). Basic residues predominate over residues 163–190; the sequence is SKNKSKKQKKDKKDKKDKKDKKDKKDKK. Positions 191–200 are enriched in basic and acidic residues; that stretch reads DKKDKTEKKE. A compositionally biased stretch (basic residues) spans 201–220; the sequence is KKEKKEKKEKKEKKDKKDKK. Residues 221-230 show a composition bias toward basic and acidic residues; that stretch reads DKKDKIDKKD. The span at 239 to 251 shows a compositional bias: polar residues; it reads NNIEVSTTASNIP.

Belongs to the PINX1 family.

Its subcellular location is the nucleus. It localises to the nucleolus. Its function is as follows. Involved in rRNA-processing at A0, A1 and A2 sites and negatively regulates telomerase. This chain is Protein PXR1 (PXR1), found in Vanderwaltozyma polyspora (strain ATCC 22028 / DSM 70294 / BCRC 21397 / CBS 2163 / NBRC 10782 / NRRL Y-8283 / UCD 57-17) (Kluyveromyces polysporus).